The following is a 154-amino-acid chain: Large-conductance mechanosensitive channel (154 aa).

Transmembrane regions (helical) follow at residues 16-36 (VLGL…ISSV), 39-59 (DLLM…GFFI), and 89-109 (GQFL…FMIM).

It belongs to the MscL family. As to quaternary structure, homopentamer.

Its subcellular location is the cell inner membrane. Its function is as follows. Channel that opens in response to stretch forces in the membrane lipid bilayer. May participate in the regulation of osmotic pressure changes within the cell. This Zymomonas mobilis subsp. mobilis (strain ATCC 31821 / ZM4 / CP4) protein is Large-conductance mechanosensitive channel.